A 637-amino-acid polypeptide reads, in one-letter code: Rab11 family-interacting protein 4 (637 aa).

In terms of domain architecture, EF-hand spans 49–84; sequence GQGEEVEKLVKYLDPNDLGRINFKDFCRGVFAMKGC. Aspartate 62, asparagine 64, arginine 68, and aspartate 73 together coordinate Ca(2+). The tract at residues 82 to 637 is necessary for interaction with RAB11A, subcellular location, homo- or heterooligomerization; that stretch reads KGCEELLKDV…HNPSILEIKH (556 aa). Disordered stretches follow at residues 138–175 and 219–256; these read EEEA…PAEK and YGEG…SAGQ. A coiled-coil region spans residues 280–617; that stretch reads KINLLNDLEA…EEINFRLRQY (338 aa). In terms of domain architecture, FIP-RBD spans 574–636; the sequence is EAKNLFAAQT…DHNPSILEIK (63 aa).

In terms of assembly, homodimer. Forms a complex with Rab11 (RAB11A or RAB11B) and ARF6. Interacts with RAB11A; the interaction is direct. Forms a heterooligomeric complex with RAB11FIP2, RAB11FIP3 and RAB11FIP5. Interacts with ECPAS. (Microbial infection) Interacts with human cytomegalovirus/HHV-5 protein gM/UL100. As to expression, present at high level in testis (at protein level). Weakly expressed in other tissues.

Its subcellular location is the endosome. The protein localises to the cytoplasm. It is found in the cytoskeleton. The protein resides in the spindle. It localises to the microtubule organizing center. Its subcellular location is the centrosome. The protein localises to the recycling endosome membrane. It is found in the cleavage furrow. The protein resides in the midbody. It localises to the cytoplasmic vesicle. Its function is as follows. Acts as a regulator of endocytic traffic by participating in membrane delivery. Required for the abscission step in cytokinesis, possibly by acting as an 'address tag' delivering recycling endosome membranes to the cleavage furrow during late cytokinesis. In case of infection by HCMV (human cytomegalovirus), may participate in egress of the virus out of nucleus; this function is independent of ARF6. In Homo sapiens (Human), this protein is Rab11 family-interacting protein 4 (RAB11FIP4).